The chain runs to 833 residues: Leucine--tRNA ligase (833 aa).

The short motif at 41–52 (PYPSGAGLHVGH) is the 'HIGH' region element. Residues 610–614 (KMSKS) carry the 'KMSKS' region motif. Lys613 is an ATP binding site.

Belongs to the class-I aminoacyl-tRNA synthetase family.

Its subcellular location is the cytoplasm. The enzyme catalyses tRNA(Leu) + L-leucine + ATP = L-leucyl-tRNA(Leu) + AMP + diphosphate. The protein is Leucine--tRNA ligase of Streptococcus gordonii (strain Challis / ATCC 35105 / BCRC 15272 / CH1 / DL1 / V288).